Here is a 195-residue protein sequence, read N- to C-terminus: Imidazoleglycerol-phosphate dehydratase (195 aa).

This sequence belongs to the imidazoleglycerol-phosphate dehydratase family.

It is found in the cytoplasm. The enzyme catalyses D-erythro-1-(imidazol-4-yl)glycerol 3-phosphate = 3-(imidazol-4-yl)-2-oxopropyl phosphate + H2O. It functions in the pathway amino-acid biosynthesis; L-histidine biosynthesis; L-histidine from 5-phospho-alpha-D-ribose 1-diphosphate: step 6/9. In Ruegeria sp. (strain TM1040) (Silicibacter sp.), this protein is Imidazoleglycerol-phosphate dehydratase.